We begin with the raw amino-acid sequence, 267 residues long: Hydroxyethylthiazole kinase (267 aa).

M46 lines the substrate pocket. Residues R122 and T168 each coordinate ATP. Substrate is bound at residue G195.

It belongs to the Thz kinase family. Mg(2+) is required as a cofactor.

It catalyses the reaction 5-(2-hydroxyethyl)-4-methylthiazole + ATP = 4-methyl-5-(2-phosphooxyethyl)-thiazole + ADP + H(+). It functions in the pathway cofactor biosynthesis; thiamine diphosphate biosynthesis; 4-methyl-5-(2-phosphoethyl)-thiazole from 5-(2-hydroxyethyl)-4-methylthiazole: step 1/1. Catalyzes the phosphorylation of the hydroxyl group of 4-methyl-5-beta-hydroxyethylthiazole (THZ). The polypeptide is Hydroxyethylthiazole kinase (Moorella thermoacetica (strain ATCC 39073 / JCM 9320)).